The chain runs to 83 residues: MNKLVSDGSVKKINYPVLYESGITPPLCEVSAPEPDAGGKRIVAYVYKSSRSTVFENPDIVKTCTVRDLKKDFVNCDEKGEGQ.

The sequence is that of Protein TrbG (trbG) from Escherichia coli (strain K12).